The sequence spans 501 residues: ATP synthase subunit alpha, chloroplastic (501 aa).

170-177 is an ATP binding site; the sequence is GDRQTGKT.

It belongs to the ATPase alpha/beta chains family. F-type ATPases have 2 components, CF(1) - the catalytic core - and CF(0) - the membrane proton channel. CF(1) has five subunits: alpha(3), beta(3), gamma(1), delta(1), epsilon(1). CF(0) has four main subunits: a, b, b' and c.

Its subcellular location is the plastid. It localises to the chloroplast thylakoid membrane. It carries out the reaction ATP + H2O + 4 H(+)(in) = ADP + phosphate + 5 H(+)(out). Its function is as follows. Produces ATP from ADP in the presence of a proton gradient across the membrane. The alpha chain is a regulatory subunit. The polypeptide is ATP synthase subunit alpha, chloroplastic (Pisum sativum (Garden pea)).